We begin with the raw amino-acid sequence, 224 residues long: Synaptogyrin-2 (224 aa).

At methionine 1 the chain carries N-acetylmethionine. Serine 3 bears the Phosphoserine mark. One can recognise an MARVEL domain in the interval 20-171; that stretch reads YVSQPQVVTR…LASLAYQRYK (152 aa). 4 helical membrane passes run 30–50, 73–93, 105–125, and 147–167; these read LVSM…GYIN, AIGV…AFFS, VIGD…GFCF, and AAIT…SLAY.

It belongs to the synaptogyrin family. May be tyrosine phosphorylated by Src. As to expression, ubiquitously expressed with lower expression in brain (at protein level).

The protein resides in the cytoplasmic vesicle membrane. Its subcellular location is the cytoplasmic vesicle. The protein localises to the secretory vesicle. It localises to the synaptic vesicle membrane. In terms of biological role, may play a role in regulated exocytosis. In neuronal cells, modulates the localization of synaptophysin/SYP into synaptic-like microvesicles and may therefore play a role in the formation and/or the maturation of this vesicles. May also play a role in GLUT4 storage and transport to the plasma membrane. In Rattus norvegicus (Rat), this protein is Synaptogyrin-2.